Consider the following 88-residue polypeptide: Small ribosomal subunit protein bS20 (88 aa).

The interval 1–27 (MANTASAKKMTRKIAKRTAINRSRRSR) is disordered.

It belongs to the bacterial ribosomal protein bS20 family.

Functionally, binds directly to 16S ribosomal RNA. The sequence is that of Small ribosomal subunit protein bS20 from Methylobacterium radiotolerans (strain ATCC 27329 / DSM 1819 / JCM 2831 / NBRC 15690 / NCIMB 10815 / 0-1).